The primary structure comprises 369 residues: Methylthioribose-1-phosphate isomerase (369 aa).

Residues 54-56 (RGA), arginine 95, and glutamine 208 each bind substrate. The active-site Proton donor is aspartate 249. 259 to 260 (NK) serves as a coordination point for substrate.

The protein belongs to the eIF-2B alpha/beta/delta subunits family. MtnA subfamily.

It catalyses the reaction 5-(methylsulfanyl)-alpha-D-ribose 1-phosphate = 5-(methylsulfanyl)-D-ribulose 1-phosphate. The protein operates within amino-acid biosynthesis; L-methionine biosynthesis via salvage pathway; L-methionine from S-methyl-5-thio-alpha-D-ribose 1-phosphate: step 1/6. Catalyzes the interconversion of methylthioribose-1-phosphate (MTR-1-P) into methylthioribulose-1-phosphate (MTRu-1-P). In Desulfosudis oleivorans (strain DSM 6200 / JCM 39069 / Hxd3) (Desulfococcus oleovorans), this protein is Methylthioribose-1-phosphate isomerase.